Consider the following 510-residue polypeptide: Histone deacetylase 3 (510 aa).

The segment at 24–338 (RRVCYFYDPE…WCYETGVALG (315 aa)) is histone deacetylase. The Proton donor/acceptor role is filled by His158. 3 residues coordinate Zn(2+): Asp193, His195, and Asp281. Residues 394–510 (PSVQFQERIP…ARNEPGSSPK (117 aa)) are disordered. 2 stretches are compositionally biased toward basic and acidic residues: residues 418-434 (DERH…DHKP) and 448-472 (VKRE…HKGP). Positions 485–503 (APTADANAVAVNAPGNARN) are enriched in low complexity.

Belongs to the histone deacetylase family. HD Type 1 subfamily. Zn(2+) serves as cofactor. In terms of tissue distribution, expressed in roots.

The protein resides in the nucleus. It carries out the reaction N(6)-acetyl-L-lysyl-[histone] + H2O = L-lysyl-[histone] + acetate. Responsible for the deacetylation of lysine residues on the N-terminal part of the core histones (H2A, H2B, H3 and H4). Histone deacetylation gives a tag for epigenetic repression and plays an important role in transcriptional regulation, cell cycle progression and developmental events. Histone deacetylases act via the formation of large multiprotein complexes. This is Histone deacetylase 3 from Oryza sativa subsp. japonica (Rice).